We begin with the raw amino-acid sequence, 281 residues long: uncharacterized protein (281 aa).

A disordered region spans residues 11-30; the sequence is PLGHKKEKPPPVSPPSPPPI. Residues 20–30 show a composition bias toward pro residues; that stretch reads PPVSPPSPPPI. 7 helical membrane-spanning segments follow: residues 58 to 78, 88 to 107, 117 to 137, 145 to 165, 171 to 191, 196 to 216, and 248 to 268; these read TVVF…LIPW, TLPF…AYWL, MLVM…GLCF, AYVL…LMAW, LAIL…IAVQ, YQRI…IVLI, and VIMF…PNYA.

It belongs to the cytomegalovirus US12 family.

It localises to the membrane. This is an uncharacterized protein from Human cytomegalovirus (strain AD169) (HHV-5).